The primary structure comprises 1281 residues: SCL-interrupting locus protein homolog (1281 aa).

Polar residues-rich tracts occupy residues 390-401 (VFKQSPLPNKLS), 461-475 (RNNSPFSSTPQNVNN), 528-560 (HLQSSNQIRRNSTSTSSAFSTPRSGCSPDSTVH), 567-592 (EQEQNINGSAQPQGTTPLMRSGSYSR), 770-790 (SKTTIPNNSKQKQVESVSTEQ), and 891-913 (QDINNSKSLSNQTDHTESPNTAE). Disordered stretches follow at residues 390–431 (VFKQ…QVSR), 450–592 (KSAS…SYSR), 765–790 (AESEPSKTTIPNNSKQKQVESVSTEQ), and 879–915 (RDDASYPLPDVQQDINNSKSLSNQTDHTESPNTAEID).

It is found in the cytoplasm. Its subcellular location is the cytosol. The protein localises to the cytoskeleton. The protein resides in the microtubule organizing center. It localises to the centrosome. It is found in the centriole. Its function is as follows. Plays an essential role in early embryonic development. Plays an important role in the regulation of centriole duplication. In Xenopus laevis (African clawed frog), this protein is SCL-interrupting locus protein homolog (stil).